The chain runs to 309 residues: MSEINISAVVVKELREKTGAGMMDCKKALIETSGNFEEAIDFLRKKGLAAAVKKSGRIASEGLTAVKVDGLISAVIEVNSETDFVARNKQFQDLVKDIVNLAIIAQNIDTLKISKMQSGKSVEEEIIDNIAIIGENLTLRRMDILEISNGAIGSYVHNEVVPHLGKISVLVGLESNAKDKVKLEALAKQIAVHVAGNNPQSIDTLSLDKSLIEREKKVFFEKSKEEGKPNHIIEKMVEGRIRKFFSEVVLLHQNFLFEPKLTVAEVIKNAEQELSAEIKITKFIRYALGEGIEHAEKNFADEVAAITQC.

Residues 82–85 form an involved in Mg(2+) ion dislocation from EF-Tu region; the sequence is TDFV.

This sequence belongs to the EF-Ts family.

The protein resides in the cytoplasm. Its function is as follows. Associates with the EF-Tu.GDP complex and induces the exchange of GDP to GTP. It remains bound to the aminoacyl-tRNA.EF-Tu.GTP complex up to the GTP hydrolysis stage on the ribosome. The chain is Elongation factor Ts (tsf) from Rickettsia prowazekii (strain Madrid E).